Consider the following 124-residue polypeptide: Transmembrane protein 254 (124 aa).

Helical transmembrane passes span leucine 16–proline 36, valine 62–valine 82, and leucine 96–phenylalanine 116.

It localises to the membrane. The polypeptide is Transmembrane protein 254 (TMEM254) (Bos taurus (Bovine)).